Here is a 297-residue protein sequence, read N- to C-terminus: Superoxide dismutase 1 copper chaperone (297 aa).

Cu cation is bound at residue Cys-11. Residues 222 to 263 (GSSCCSKKDSSPSEKPSCCSQEKKSCCSSKKPSCCSQEKKGC) form a disordered region. Residues 234 to 257 (SEKPSCCSQEKKSCCSSKKPSCCS) are compositionally biased toward low complexity.

Belongs to the CCS1 family.

It is found in the cytoplasm. In terms of biological role, copper chaperone for superoxide dismutase 1 (sod1). Binds copper ions and delivers them specifically to sod1. Also has a role in cell protection against copper ion toxicity during conditions of copper excess. The C-terminal region is thought to act specifically in this sequestration role. This is Superoxide dismutase 1 copper chaperone (ccs1) from Schizosaccharomyces pombe (strain 972 / ATCC 24843) (Fission yeast).